We begin with the raw amino-acid sequence, 341 residues long: Homeobox protein mls-2 (341 aa).

2 disordered regions span residues 1–78 (MPTS…DSTN) and 139–209 (SNPD…TVFS). Residues 64–78 (TTQSSPSASSEDSTN) are compositionally biased toward polar residues. The segment covering 153 to 166 (KDEKSEGKDGETRD) has biased composition (basic and acidic residues). A DNA-binding region (homeobox) is located at residues 201 to 260 (KKKTRTVFSRSQVSQLEMMFECKRYLSSQERSNLAQKLHLTETQVKIWFQNRRNKFKRQA).

Belongs to the HMX homeobox family. In terms of tissue distribution, expressed in a subset of head neurons, including AIM and ASK (at protein level).

It is found in the nucleus. In terms of biological role, transcription factor that binds to the promoter of target genes. Regulates fate specification and/or differentiation of multiple cell types arising from the embryonic mesodermal (M) lineage and the ABp(l/r)paa precursors. In the postembryonic M lineage, regulates cleavage orientation, cell proliferation and cell fate specification. Regulates hlh-1 expression to specify coelomocyte fate in the mesodermal (M) lineage. In AWC neurons, initiates expression of ceh-36, leading to the expression of terminal differentiation genes. Regulates ventral cephalic sheath (CEPsh) glia differentiation and expression of transcription factor hlh-17 in CEPsh glia. Promotes terminal differentiation and morphogenesis of the epithelial duct and pore cells. In the duct cell, cooperates with the EGF-Ras-ERK pathway in turning on the terminal differentiation gene lin-48. In Caenorhabditis elegans, this protein is Homeobox protein mls-2.